We begin with the raw amino-acid sequence, 153 residues long: L-alanine exporter AlaE (153 aa).

4 helical membrane passes run 16 to 36 (VAMV…LSEM), 42 to 62 (LSSR…YGLY), 86 to 106 (LFAY…AIGA), and 114 to 134 (AVGS…YFLE).

This sequence belongs to the AlaE exporter family.

It is found in the cell inner membrane. In terms of biological role, exports L-alanine. The polypeptide is L-alanine exporter AlaE (Musicola paradisiaca (strain Ech703) (Dickeya paradisiaca)).